A 206-amino-acid polypeptide reads, in one-letter code: Large ribosomal subunit protein uL3 (206 aa).

The interval 122–154 (VVKRHGHAGGPGGHGSRFHRHPGSMGANSTPSR) is disordered.

Belongs to the universal ribosomal protein uL3 family. As to quaternary structure, part of the 50S ribosomal subunit. Forms a cluster with proteins L14 and L19.

Its function is as follows. One of the primary rRNA binding proteins, it binds directly near the 3'-end of the 23S rRNA, where it nucleates assembly of the 50S subunit. This Leptospira borgpetersenii serovar Hardjo-bovis (strain JB197) protein is Large ribosomal subunit protein uL3.